Reading from the N-terminus, the 76-residue chain is Exodeoxyribonuclease 7 small subunit (76 aa).

Belongs to the XseB family. In terms of assembly, heterooligomer composed of large and small subunits.

Its subcellular location is the cytoplasm. It catalyses the reaction Exonucleolytic cleavage in either 5'- to 3'- or 3'- to 5'-direction to yield nucleoside 5'-phosphates.. Its function is as follows. Bidirectionally degrades single-stranded DNA into large acid-insoluble oligonucleotides, which are then degraded further into small acid-soluble oligonucleotides. The protein is Exodeoxyribonuclease 7 small subunit of Latilactobacillus sakei subsp. sakei (strain 23K) (Lactobacillus sakei subsp. sakei).